The following is a 178-amino-acid chain: tRNA (cytidine(56)-2'-O)-methyltransferase (178 aa).

Residues L84, 112–116, and 130–137 each bind S-adenosyl-L-methionine; these read GAEKV and VGNQPHSE.

This sequence belongs to the aTrm56 family. In terms of assembly, homodimer.

The protein resides in the cytoplasm. It catalyses the reaction cytidine(56) in tRNA + S-adenosyl-L-methionine = 2'-O-methylcytidine(56) in tRNA + S-adenosyl-L-homocysteine + H(+). Functionally, specifically catalyzes the AdoMet-dependent 2'-O-ribose methylation of cytidine at position 56 in tRNAs. The chain is tRNA (cytidine(56)-2'-O)-methyltransferase from Methanocella arvoryzae (strain DSM 22066 / NBRC 105507 / MRE50).